A 211-amino-acid polypeptide reads, in one-letter code: Thiamine-phosphate synthase (211 aa).

Residues 37–41 (QLRIK) and Asn-69 each bind 4-amino-2-methyl-5-(diphosphooxymethyl)pyrimidine. 2 residues coordinate Mg(2+): Asp-70 and Asp-89. Residue Ser-108 participates in 4-amino-2-methyl-5-(diphosphooxymethyl)pyrimidine binding. A 2-[(2R,5Z)-2-carboxy-4-methylthiazol-5(2H)-ylidene]ethyl phosphate-binding site is contributed by 134–136 (TQT). Position 137 (Lys-137) interacts with 4-amino-2-methyl-5-(diphosphooxymethyl)pyrimidine. 2-[(2R,5Z)-2-carboxy-4-methylthiazol-5(2H)-ylidene]ethyl phosphate contacts are provided by residues Gly-166 and 186 to 187 (VS).

This sequence belongs to the thiamine-phosphate synthase family. Mg(2+) serves as cofactor.

It carries out the reaction 2-[(2R,5Z)-2-carboxy-4-methylthiazol-5(2H)-ylidene]ethyl phosphate + 4-amino-2-methyl-5-(diphosphooxymethyl)pyrimidine + 2 H(+) = thiamine phosphate + CO2 + diphosphate. The enzyme catalyses 2-(2-carboxy-4-methylthiazol-5-yl)ethyl phosphate + 4-amino-2-methyl-5-(diphosphooxymethyl)pyrimidine + 2 H(+) = thiamine phosphate + CO2 + diphosphate. The catalysed reaction is 4-methyl-5-(2-phosphooxyethyl)-thiazole + 4-amino-2-methyl-5-(diphosphooxymethyl)pyrimidine + H(+) = thiamine phosphate + diphosphate. It participates in cofactor biosynthesis; thiamine diphosphate biosynthesis; thiamine phosphate from 4-amino-2-methyl-5-diphosphomethylpyrimidine and 4-methyl-5-(2-phosphoethyl)-thiazole: step 1/1. Functionally, condenses 4-methyl-5-(beta-hydroxyethyl)thiazole monophosphate (THZ-P) and 2-methyl-4-amino-5-hydroxymethyl pyrimidine pyrophosphate (HMP-PP) to form thiamine monophosphate (TMP). In Salmonella choleraesuis (strain SC-B67), this protein is Thiamine-phosphate synthase.